Reading from the N-terminus, the 299-residue chain is ATP synthase gamma chain (299 aa).

Belongs to the ATPase gamma chain family. F-type ATPases have 2 components, CF(1) - the catalytic core - and CF(0) - the membrane proton channel. CF(1) has five subunits: alpha(3), beta(3), gamma(1), delta(1), epsilon(1). CF(0) has three main subunits: a, b and c.

It localises to the cell membrane. Produces ATP from ADP in the presence of a proton gradient across the membrane. The gamma chain is believed to be important in regulating ATPase activity and the flow of protons through the CF(0) complex. This is ATP synthase gamma chain from Clavibacter michiganensis subsp. michiganensis (strain NCPPB 382).